The sequence spans 463 residues: L-seryl-tRNA(Sec) selenium transferase (463 aa).

At K295 the chain carries N6-(pyridoxal phosphate)lysine.

Belongs to the SelA family. As to quaternary structure, homodecamer; pentamer of dimers. Binds only one seryl-tRNA(Sec) per dimer. It depends on pyridoxal 5'-phosphate as a cofactor.

The protein localises to the cytoplasm. The enzyme catalyses L-seryl-tRNA(Sec) + selenophosphate + H(+) = L-selenocysteinyl-tRNA(Sec) + phosphate. The protein operates within aminoacyl-tRNA biosynthesis; selenocysteinyl-tRNA(Sec) biosynthesis; selenocysteinyl-tRNA(Sec) from L-seryl-tRNA(Sec) (bacterial route): step 1/1. In terms of biological role, converts seryl-tRNA(Sec) to selenocysteinyl-tRNA(Sec) required for selenoprotein biosynthesis. This is L-seryl-tRNA(Sec) selenium transferase from Escherichia coli (strain 55989 / EAEC).